The chain runs to 1905 residues: MQSRLLLLGAPGGLGDVASRRVRLLLRQVLRGRPGGDQQRLEVRLLHSGATDSGETVSIGDVSYKLKTPKNPELVPQNYISDSPAQSIVQHLRWLMQKDLLGQDVFLIGPPGPLRRSVAMQYLELTKREVEYIALSRDTTETDLKQRREIRAGTAFYIDQCAVRAATEGRTLVLEGLEKAERNVLPVLNNLLENREMQLEDGRFLMSAERYDKLLQDHTKEELDAWKIVRVSENFRVIALGLPVPRYSGNPLDPPLRSRFQARDIYFLPFQDQLKLLYSVGANVSAEKISQLLSFATTLCSQESSTLGLPDFPLDSLPEAVQILDSFPMMSIEHALQWVYPYTLLLGHEGKMAVEGVLKRFELQGSGHSLLPKEIVRVERMTDSHGSYAHVTIRVAGKEVTIKVPAGTRAVNQPCAPDHFIQTVSHKQLLAEMVQSHMVKDICLIGGKGCGKTVIAKNFAALLGYSIEPIMLYQDMTARDLLQQRYTLPNGDTAWRSSPLVSAAREGKLVLLDGIHRVNAGTLAVLQRLIHDRELSLYDGSRLLREDRYLSLKEKLQLTDEQLQNRSIFPIHPSFRIIALAEPPIVGSTTQQWLGPEFLTMFFFHHMKPLVKSEEIQVIKETVPNVPQEALEKLLSVTHKLRETQDPTAQSLAASLSTRQLLRISRRLSKYPSENLHDAITKACLSRFLPSLAQSALEKNLADAAIETNTEDSLEPELENYKCEVVAGSLKIGAVSVPVHNAHEKMKVPDVLFYDNVQHMVVMEDMLKDFVLGEHLLLVGNQGVGKNKIVDRFLHLLNRPREYIQLHRDTTVQSLTLQPTVKGGLIVYEDSPLVKAVKLGHILVVDEADKAPTNVTCILKTLVENGEMILADGRRIVADAANVDGRENLVAIHPDFRMLALANRPGFPFLGNDFFGTLGDIFSCHAIDNPKPHSELSMLKQYGPDVPEPVLQKLVAAFGELRNLADQGIINYPYSTREVVNIVKHLQKFPTEGLSSVVRNVFDFDSYNNDMREILMNTLHKYGIPIGAKPTNVQLAKEFPLPEKTFMGYWIVGQTGNGMQKVLCPAETNHVDIKGPVLVNMEKYPIEKHEARFLSFTEECTSWKFPLDEVNLICDIAVSHENGEQTLYVAACNPVSLYFMNMTGKNGFFVDFFDIFPRMASGSWRPFVTVAPLGSPLRGQVVLHEEQSNAVLLLDTTGSAIRRLVLPTEEFTSKKSSWWSKEEGETYRMCKEFSHKNWVVFYKQTGNSLTVLDVLEGLAHTISLPINLRTVFLVAEDKWLLVENETNQKYLLTKPAHIGSEDTGACQLYMLKEELPSTGFGVTQETEFCIPDKVSSDQLSSENLTSAVGQKIASPNRILSDENSHATIVVGFPDLMSPSEVYSWKRSSSLRQPSVTSMTMYTGKRTNATPRHNNCVTLTHTNQVVRILPPGEVPLKDLYPKDVTPPQTAGYIEVTDLQAKKLRYIPVPSAESLSPYTAWISAISDTDALLAEWDKSSVVTVDMGGRVRLWETGLERLQQSLMEWRNMIGQDSDKHVQITIERDSNEDVSDPKHGKEDPDNMPHVGGNTWAGGTGGRDTAGLGGKGGPYRLDAGHPVYQVSEVEKDAVPEDVKRAAREMAQKAFQQRLKEIQMSEYDAATYERFSSAVQRQVHALRIILDNLQAKGKERQWLRHQATGELDDAKIIDGLAGEKSIYKRRGDLEPQLGSPQQKPKRLRLVVDVSGSMYRFNGVDRRLERSMEAVCMVMEAFENYEEKFKYDIAGHSGDGYNIKLVPVNQIPKNNKQRLEILKTMHEHSQFCMSGDHTLEGTEHAIKDITTEEADEYFVIILSDANLSRYGINPARFAQILTSDPQVNAFAIFIGSLGDQAARLQRTLPAGRSFIAMDTKKIPQILQQIFTSTMLSSI.

A mitochondrion-targeting transit peptide spans 1–45; it reads MQSRLLLLGAPGGLGDVASRRVRLLLRQVLRGRPGGDQQRLEVRL. Residues 1 to 260 are interaction with PEX7; sequence MQSRLLLLGA…PLDPPLRSRF (260 aa). An ATP-binding site is contributed by 446 to 453; that stretch reads GGKGCGKT. Over residues 1541–1560 the composition is skewed to basic and acidic residues; the sequence is ERDSNEDVSDPKHGKEDPDN. The segment at 1541-1583 is disordered; it reads ERDSNEDVSDPKHGKEDPDNMPHVGGNTWAGGTGGRDTAGLGG. The span at 1568–1583 shows a compositional bias: gly residues; that stretch reads TWAGGTGGRDTAGLGG. The VWFA domain maps to 1714–1896; sequence RLRLVVDVSG…KKIPQILQQI (183 aa).

As to quaternary structure, monomer. Interacts with PEX7. Interacts with PEX5 in a PEX7-dependent manner. In terms of tissue distribution, isoform 1 is predominantly expressed in liver, kidney, pancreas, heart, and skeletal muscle (at protein level).

Its subcellular location is the mitochondrion. In terms of biological role, exhibits ATPase activity in vitro. The chain is von Willebrand factor A domain-containing protein 8 (Vwa8) from Mus musculus (Mouse).